The sequence spans 165 residues: uncharacterized protein (165 aa).

The N-terminal stretch at 1–17 (MIRGFFLILLFLLLAFF) is a signal peptide.

This is an uncharacterized protein from Aquifex aeolicus (strain VF5).